We begin with the raw amino-acid sequence, 336 residues long: Fructose-1,6-bisphosphatase class 1 (336 aa).

Mg(2+) contacts are provided by Glu92, Asp115, Leu117, and Asp118. Substrate contacts are provided by residues 118 to 121 (DGSS), Asn211, Tyr244, 262 to 264 (YLY), and Lys274. Glu280 contributes to the Mg(2+) binding site.

Belongs to the FBPase class 1 family. Homotetramer. The cofactor is Mg(2+).

Its subcellular location is the cytoplasm. The enzyme catalyses beta-D-fructose 1,6-bisphosphate + H2O = beta-D-fructose 6-phosphate + phosphate. Its pathway is carbohydrate biosynthesis; gluconeogenesis. This chain is Fructose-1,6-bisphosphatase class 1, found in Vibrio atlanticus (strain LGP32) (Vibrio splendidus (strain Mel32)).